Here is a 200-residue protein sequence, read N- to C-terminus: Proteasome subunit beta 2 (200 aa).

A propeptide spans 1–7 (METKKTG) (removed in mature form; by autocatalysis). Threonine 8 serves as the catalytic Nucleophile.

The protein belongs to the peptidase T1B family. In terms of assembly, the 20S proteasome core is composed of 14 alpha and 14 beta subunits that assemble into four stacked heptameric rings, resulting in a barrel-shaped structure. The two inner rings, each composed of seven catalytic beta subunits, are sandwiched by two outer rings, each composed of seven alpha subunits. The catalytic chamber with the active sites is on the inside of the barrel. Has a gated structure, the ends of the cylinder being occluded by the N-termini of the alpha-subunits. Is capped at one or both ends by the proteasome regulatory ATPase, PAN.

It is found in the cytoplasm. The enzyme catalyses Cleavage of peptide bonds with very broad specificity.. Its activity is regulated as follows. The formation of the proteasomal ATPase PAN-20S proteasome complex, via the docking of the C-termini of PAN into the intersubunit pockets in the alpha-rings, triggers opening of the gate for substrate entry. Interconversion between the open-gate and close-gate conformations leads to a dynamic regulation of the 20S proteasome proteolysis activity. In terms of biological role, component of the proteasome core, a large protease complex with broad specificity involved in protein degradation. The protein is Proteasome subunit beta 2 of Thermococcus onnurineus (strain NA1).